The chain runs to 300 residues: Transmembrane protein 158 (300 aa).

The signal sequence occupies residues 1 to 20 (MLPLLAALLAAACPLPPVRG). N75 carries N-linked (GlcNAc...) asparagine glycosylation. The next 2 membrane-spanning stretches (helical) occupy residues 231-251 (LVIVVWSVAALIWPVPIIAGF) and 273-293 (VPAGTTAAAAAAAAAAAAAAV).

The protein belongs to the TMEM158 family. In terms of processing, N-glycosylated.

The protein localises to the membrane. In terms of biological role, receptor for brain injury-derived neurotrophic peptide (BINP), a synthetic 13-mer peptide. The protein is Transmembrane protein 158 (TMEM158) of Homo sapiens (Human).